We begin with the raw amino-acid sequence, 312 residues long: Probable HTH-type transcriptional regulator LrhA (312 aa).

The region spanning 11–68 (LDLDLLRTFVAVADLNTFAAAAAAVCRTQSAVSQQMQRLEQLVGKELFARHGRNKLLT) is the HTH lysR-type domain. The H-T-H motif DNA-binding region spans 28-47 (FAAAAAAVCRTQSAVSQQMQ).

The protein belongs to the LysR transcriptional regulatory family.

Not known, does not seem to act on the proton translocating NADH dehydrogenase genes (nuoA-N) which are part of the lrhA operon. This chain is Probable HTH-type transcriptional regulator LrhA (lrhA), found in Escherichia coli (strain K12).